The chain runs to 370 residues: Histidinol-phosphate aminotransferase (370 aa).

Lysine 229 is modified (N6-(pyridoxal phosphate)lysine).

It belongs to the class-II pyridoxal-phosphate-dependent aminotransferase family. Histidinol-phosphate aminotransferase subfamily. In terms of assembly, homodimer. Pyridoxal 5'-phosphate is required as a cofactor.

It carries out the reaction L-histidinol phosphate + 2-oxoglutarate = 3-(imidazol-4-yl)-2-oxopropyl phosphate + L-glutamate. Its pathway is amino-acid biosynthesis; L-histidine biosynthesis; L-histidine from 5-phospho-alpha-D-ribose 1-diphosphate: step 7/9. The protein is Histidinol-phosphate aminotransferase of Helicobacter hepaticus (strain ATCC 51449 / 3B1).